The sequence spans 117 residues: Large ribosomal subunit protein bL19 (117 aa).

The protein belongs to the bacterial ribosomal protein bL19 family.

Functionally, this protein is located at the 30S-50S ribosomal subunit interface and may play a role in the structure and function of the aminoacyl-tRNA binding site. This is Large ribosomal subunit protein bL19 from Kineococcus radiotolerans (strain ATCC BAA-149 / DSM 14245 / SRS30216).